The chain runs to 776 residues: Protein SEY1 (776 aa).

The Cytoplasmic portion of the chain corresponds to Met-1 to His-681. Residues Gly-34–Tyr-263 enclose the GB1/RHD3-type G domain. Gly-44 to Ser-51 provides a ligand contact to GTP. A helical transmembrane segment spans residues Ile-682–Ile-702. Over Arg-703–Pro-705 the chain is Lumenal. A helical transmembrane segment spans residues Leu-706 to Leu-726. Residues Trp-727–Lys-776 are Cytoplasmic-facing.

Belongs to the TRAFAC class dynamin-like GTPase superfamily. GB1/RHD3 GTPase family. RHD3 subfamily. Interacts with RTN1 and YOP1; GTP binding is not required for these interactions.

The protein resides in the endoplasmic reticulum membrane. In terms of biological role, cooperates with the reticulon proteins RTN1 and RTN2 and the tubule-shaping DP1 family protein YOP1 to generate and maintain the structure of the tubular endoplasmic reticulum network. Has GTPase activity, which is required for its function in ER organization. In Saccharomyces cerevisiae (strain ATCC 204508 / S288c) (Baker's yeast), this protein is Protein SEY1.